The primary structure comprises 392 residues: Xyloside xylosyltransferase 1 (392 aa).

The Cytoplasmic segment spans residues 1-19 (MGLLRGGAACARAMARLGA). A helical; Signal-anchor for type II membrane protein transmembrane segment spans residues 20–42 (LRSHYCALLLAAALAVCAFYYLG). The Lumenal portion of the chain corresponds to 43–392 (SGRETFSSAT…GNCNTPIPED (350 aa)). 103 to 105 (MFT) is a binding site for UDP-alpha-D-xylose. Aspartate 225 lines the Mn(2+) pocket. Leucine 226 serves as a coordination point for UDP-alpha-D-xylose. Aspartate 227 lines the Mn(2+) pocket. Residues 262-265 (HTFW) form an interaction with target proteins region. Serine 289, leucine 327, and glutamine 330 together coordinate UDP-alpha-D-xylose. Positions 330 and 359 each coordinate a glycoprotein. 2 disulfide bridges follow: cysteine 349-cysteine 374 and cysteine 356-cysteine 385. Position 382 (histidine 382) interacts with Mn(2+). Residue asparagine 384 coordinates a glycoprotein.

Belongs to the glycosyltransferase 8 family. In terms of assembly, homodimer. Dimer formation may be essential for the retention in endoplasmic reticulum. Mg(2+) is required as a cofactor. Mn(2+) serves as cofactor.

The protein localises to the endoplasmic reticulum membrane. It catalyses the reaction 3-O-[alpha-D-xylosyl-(1-&gt;3)-beta-D-glucosyl]-L-seryl-[EGF-like domain protein] + UDP-alpha-D-xylose = 3-O-[alpha-D-xylosyl-(1-&gt;3)-alpha-D-xylosyl-(1-&gt;3)-beta-D-glucosyl]-L-seryl-[EGF-like domain protein] + UDP + H(+). In terms of biological role, alpha-1,3-xylosyltransferase, which elongates the O-linked xylose-glucose disaccharide attached to EGF-like repeats in the extracellular domain of target proteins by catalyzing the addition of the second xylose. Known targets include Notch proteins and coagulation factors, such as F9. The polypeptide is Xyloside xylosyltransferase 1 (Xxylt1) (Mus musculus (Mouse)).